We begin with the raw amino-acid sequence, 175 residues long: PE-PGRS family protein PE_PGRS8 (175 aa).

The region spanning 1-93 (MSFVIAAPEA…AGSYAAAEAA (93 aa)) is the PE domain.

Belongs to the mycobacterial PE family. PGRS subfamily.

The protein resides in the secreted. Its subcellular location is the cell wall. The protein localises to the cell surface. The protein is PE-PGRS family protein PE_PGRS8 of Mycobacterium tuberculosis (strain ATCC 25618 / H37Rv).